A 294-amino-acid chain; its full sequence is Acetylglutamate kinase (294 aa).

Substrate contacts are provided by residues 69–70, Arg91, and Asn190; that span reads GG.

It belongs to the acetylglutamate kinase family. ArgB subfamily.

It is found in the cytoplasm. It catalyses the reaction N-acetyl-L-glutamate + ATP = N-acetyl-L-glutamyl 5-phosphate + ADP. It functions in the pathway amino-acid biosynthesis; L-arginine biosynthesis; N(2)-acetyl-L-ornithine from L-glutamate: step 2/4. Catalyzes the ATP-dependent phosphorylation of N-acetyl-L-glutamate. This chain is Acetylglutamate kinase, found in Mycobacterium bovis (strain ATCC BAA-935 / AF2122/97).